We begin with the raw amino-acid sequence, 122 residues long: Large ribosomal subunit protein uL14 (122 aa).

This sequence belongs to the universal ribosomal protein uL14 family. As to quaternary structure, part of the 50S ribosomal subunit. Forms a cluster with proteins L3 and L19. In the 70S ribosome, L14 and L19 interact and together make contacts with the 16S rRNA in bridges B5 and B8.

In terms of biological role, binds to 23S rRNA. Forms part of two intersubunit bridges in the 70S ribosome. This Parvibaculum lavamentivorans (strain DS-1 / DSM 13023 / NCIMB 13966) protein is Large ribosomal subunit protein uL14.